Consider the following 396-residue polypeptide: Lipid-A-disaccharide synthase (396 aa).

The protein belongs to the LpxB family.

It carries out the reaction a lipid X + a UDP-2-N,3-O-bis[(3R)-3-hydroxyacyl]-alpha-D-glucosamine = a lipid A disaccharide + UDP + H(+). The protein operates within bacterial outer membrane biogenesis; LPS lipid A biosynthesis. Condensation of UDP-2,3-diacylglucosamine and 2,3-diacylglucosamine-1-phosphate to form lipid A disaccharide, a precursor of lipid A, a phosphorylated glycolipid that anchors the lipopolysaccharide to the outer membrane of the cell. The sequence is that of Lipid-A-disaccharide synthase from Hahella chejuensis (strain KCTC 2396).